Consider the following 513-residue polypeptide: Histidine ammonia-lyase (513 aa).

The segment at residues 143–145 (ASG) is a cross-link (5-imidazolinone (Ala-Gly)). Serine 144 is subject to 2,3-didehydroalanine (Ser).

This sequence belongs to the PAL/histidase family. In terms of processing, contains an active site 4-methylidene-imidazol-5-one (MIO), which is formed autocatalytically by cyclization and dehydration of residues Ala-Ser-Gly.

The protein localises to the cytoplasm. It carries out the reaction L-histidine = trans-urocanate + NH4(+). Its pathway is amino-acid degradation; L-histidine degradation into L-glutamate; N-formimidoyl-L-glutamate from L-histidine: step 1/3. The polypeptide is Histidine ammonia-lyase (Paracoccus denitrificans (strain Pd 1222)).